The chain runs to 272 residues: Methyl-CpG-binding domain-containing protein 2 (272 aa).

Over residues 1–15 the composition is skewed to polar residues; it reads MSMSQSRAVQRSSSP. Positions 1–24 are disordered; it reads MSMSQSRAVQRSSSPNEDRGENQL. The CW-type zinc-finger motif lies at 53–112; it reads CPSIGAFTVQCASCFKWRLMPSMQKYEEIREQLLENPFFCDTAREWKPDISCDVPADIYQ. The short motif at 62–104 is the MBD-associated domain (MAD) element; the sequence is QCASCFKWRLMPSMQKYEEIREQLLENPFFCDTAREWKPDISC. Positions 63, 66, 92, and 104 each coordinate Zn(2+). Residues 118–192 form the MBD domain; that stretch reads WAIDKPNISR…SQFSFQIPKP (75 aa). The segment covering 236-250 has biased composition (polar residues); it reads LGTPTESGLNNSHYQ. Residues 236 to 272 are disordered; that stretch reads LGTPTESGLNNSHYQPSKKKKTSTLSIFGSNDELADR.

As to quaternary structure, interacts (via MBD domain) with DDM1. In terms of tissue distribution, expressed in buds, flowers, stems, siliques and mature seeds.

The protein resides in the nucleus. Functionally, probable transcriptional regulator. This chain is Methyl-CpG-binding domain-containing protein 2 (MBD2), found in Arabidopsis thaliana (Mouse-ear cress).